The sequence spans 706 residues: Frizzled-6 (706 aa).

The N-terminal stretch at 1–18 (MEMFTFLLTCIFLPLLRG) is a signal peptide. Positions 19-132 (HSLFTCEPIT…CDRLQYCDET (114 aa)) constitute an FZ domain. Residues 19-201 (HSLFTCEPIT…SDELEFAKSF (183 aa)) lie on the Extracellular side of the membrane. 5 disulfide bridges follow: cysteine 24–cysteine 85, cysteine 32–cysteine 78, cysteine 69–cysteine 106, cysteine 95–cysteine 129, and cysteine 99–cysteine 123. An N-linked (GlcNAc...) asparagine glycan is attached at asparagine 38. The helical transmembrane segment at 202–222 (IGTVSIFCLCATLFTFLTFLI) threads the bilayer. Topologically, residues 223–233 (DVRRFRYPERP) are cytoplasmic. Residues 234-254 (IIYYSVCYSIVSLMYFIGFLL) form a helical membrane-spanning segment. At 255–284 (GDSTACNKADEKLELGDTVVLGSQNKACTV) the chain is on the extracellular side. The chain crosses the membrane as a helical span at residues 285-305 (LFMLLYFFTMAGTVWWVILTI). Topologically, residues 306–324 (TWFLAAGRKWSCEAIEQKA) are cytoplasmic. The helical transmembrane segment at 325 to 345 (VWFHAVAWGTPGFLTVMLLAM) threads the bilayer. Topologically, residues 346 to 370 (NKVEGDNISGVCFVGLYDLDASRYF) are extracellular. Asparagine 352 carries N-linked (GlcNAc...) asparagine glycosylation. A helical transmembrane segment spans residues 371–391 (VLLPLCLCVFVGLSLLLAGII). The Cytoplasmic segment spans residues 392 to 416 (SLNHVRQVIQHDGRNQEKLKKFMIR). A helical membrane pass occupies residues 417 to 437 (IGVFSGLYLVPLVTLLGCYVY). Residues 438–473 (EQVNRITWEITWVSDHCRQYHIPCPYQAKAKARPEL) lie on the Extracellular side of the membrane. The helical transmembrane segment at 474–494 (ALFMIKYLMTLIVGISAVFWV) threads the bilayer. Topologically, residues 495 to 706 (GSKKTCTEWA…EQGGGCHSDT (212 aa)) are cytoplasmic. A Lys-Thr-X-X-X-Trp motif, mediates interaction with the PDZ domain of Dvl family members motif is present at residues 498 to 503 (KTCTEW). Residues 588-706 (EIQTSPETSM…EQGGGCHSDT (119 aa)) are disordered. Residues 646 to 658 (ARSEGRISPKSDI) show a composition bias toward basic and acidic residues. Serine 653 is modified (phosphoserine). Over residues 662–672 (GLAQSNNLQVP) the composition is skewed to polar residues. Positions 673–685 (SSSEPSSLKGSTS) are enriched in low complexity. Residues 694–706 (VRKEQGGGCHSDT) show a composition bias toward basic and acidic residues.

The protein belongs to the G-protein coupled receptor Fz/Smo family. In terms of assembly, interacts with LMBR1L. Post-translationally, ubiquitinated by ZNRF3, leading to its degradation by the proteasome. Detected in adult heart, brain, placenta, lung, liver, skeletal muscle, kidney, pancreas, thymus, prostate, testis, ovary, small intestine and colon. In the fetus, expressed in brain, lung, liver and kidney.

It localises to the membrane. It is found in the cell membrane. Its subcellular location is the cell surface. The protein localises to the apical cell membrane. The protein resides in the cytoplasmic vesicle membrane. It localises to the endoplasmic reticulum membrane. Its function is as follows. Receptor for Wnt proteins. Most of frizzled receptors are coupled to the beta-catenin canonical signaling pathway, which leads to the activation of disheveled proteins, inhibition of GSK-3 kinase, nuclear accumulation of beta-catenin and activation of Wnt target genes. A second signaling pathway involving PKC and calcium fluxes has been seen for some family members, but it is not yet clear if it represents a distinct pathway or if it can be integrated in the canonical pathway, as PKC seems to be required for Wnt-mediated inactivation of GSK-3 kinase. Both pathways seem to involve interactions with G-proteins. May be involved in transduction and intercellular transmission of polarity information during tissue morphogenesis and/or in differentiated tissues. Together with FZD3, is involved in the neural tube closure and plays a role in the regulation of the establishment of planar cell polarity (PCP), particularly in the orientation of asymmetric bundles of stereocilia on the apical faces of a subset of auditory and vestibular sensory cells located in the inner ear. The polypeptide is Frizzled-6 (FZD6) (Homo sapiens (Human)).